Reading from the N-terminus, the 316-residue chain is Probable cell division protein WhiA (316 aa).

Residues 274–308 constitute a DNA-binding region (H-T-H motif); sequence SLKELGEMVSTGVISKSGVNHRLRKIDEIAEKLRN.

This sequence belongs to the WhiA family.

Its function is as follows. Involved in cell division and chromosome segregation. The sequence is that of Probable cell division protein WhiA from Macrococcus caseolyticus (strain JCSC5402) (Macrococcoides caseolyticum).